The primary structure comprises 367 residues: tRNA-specific 2-thiouridylase MnmA (367 aa).

ATP is bound by residues 11 to 18 and Met-37; that span reads GLSGGVDS. The interaction with target base in tRNA stretch occupies residues 109 to 111; that stretch reads NPD. Cys-114 acts as the Nucleophile in catalysis. A disulfide bridge connects residues Cys-114 and Cys-211. ATP is bound at residue Gly-139. An interaction with tRNA region spans residues 161-163; that stretch reads KDQ. Cys-211 functions as the Cysteine persulfide intermediate in the catalytic mechanism.

The protein belongs to the MnmA/TRMU family.

The protein resides in the cytoplasm. The enzyme catalyses S-sulfanyl-L-cysteinyl-[protein] + uridine(34) in tRNA + AH2 + ATP = 2-thiouridine(34) in tRNA + L-cysteinyl-[protein] + A + AMP + diphosphate + H(+). Its function is as follows. Catalyzes the 2-thiolation of uridine at the wobble position (U34) of tRNA, leading to the formation of s(2)U34. The chain is tRNA-specific 2-thiouridylase MnmA from Mycoplasma genitalium (strain ATCC 33530 / DSM 19775 / NCTC 10195 / G37) (Mycoplasmoides genitalium).